The sequence spans 152 residues: Transcriptional regulator MraZ (152 aa).

SpoVT-AbrB domains are found at residues 5-52 (ASAI…PIHE) and 81-124 (AHEV…DEQS).

The protein belongs to the MraZ family. Forms oligomers.

The protein resides in the cytoplasm. Its subcellular location is the nucleoid. This Shewanella baltica (strain OS155 / ATCC BAA-1091) protein is Transcriptional regulator MraZ.